Consider the following 708-residue polypeptide: uncharacterized protein (708 aa).

Disordered regions lie at residues 1-79 (MHAR…RRSS), 119-301 (AGEF…IHQR), 349-390 (YLSH…GDEN), and 410-461 (SNSF…KRQR). Positions 65–74 (LPPPLPPPPV) are enriched in pro residues. Positions 238 to 249 (DEAQSKTGSSSA) are enriched in polar residues. A compositionally biased stretch (low complexity) spans 260 to 274 (SKVSEGSSSLSAGSG). Over residues 410-419 (SNSFPSSILR) the composition is skewed to polar residues. Residues 442–461 (VGEKRPGEGSDLEEGSKRQR) are compositionally biased toward basic and acidic residues.

This is an uncharacterized protein from Arabidopsis thaliana (Mouse-ear cress).